The primary structure comprises 244 residues: tRNA pseudouridine synthase B (244 aa).

Aspartate 46 serves as the catalytic Nucleophile.

This sequence belongs to the pseudouridine synthase TruB family. Type 1 subfamily.

The enzyme catalyses uridine(55) in tRNA = pseudouridine(55) in tRNA. In terms of biological role, responsible for synthesis of pseudouridine from uracil-55 in the psi GC loop of transfer RNAs. This is tRNA pseudouridine synthase B from Bordetella parapertussis (strain 12822 / ATCC BAA-587 / NCTC 13253).